Here is a 667-residue protein sequence, read N- to C-terminus: Gamma-tubulin complex component 4 (667 aa).

The segment at Asp-424–Pro-446 is disordered.

The protein belongs to the TUBGCP family. In terms of assembly, component of the gamma-tubulin ring complex (gTuRC) consisting of TUBGCP2, TUBGCP3, TUBGCP4, TUBGCP5 and TUBGCP6 and gamma-tubulin TUBG1 or TUBG2. TUBGCP2, TUBGCP3, TUBGCP4, TUBGCP5 and TUBGCP6 assemble in a 5:5:2:1:1 stoichiometry; each is associated with a gamma-tubulin, thereby arranging 14 gamma-tubulins in a helical manner. Gamma-tubulin at the first position is blocked by TUBGCP3 at the last position, allowing 13 protafilaments to grow into a microtubule. The gTuRC (via TUBGCP3 and TUBGCP6) interacts with ACTB and MZT1; the interactions form a luminal bridge that stabilizes the initial structure during complex assembly. The gTuRC (via TUBGCP2) interacts with MZT2A/MZT2B and CDK5RAP2 (via CM1 motif); the interactions play a role in gTuRC activation. Interacts with NINL. Interacts with ATF5; the ATF5:PCNT:polyglutamylated tubulin (PGT) tripartite unites the mother centriole and the pericentriolar material (PCM) in the centrosome.

The protein localises to the cytoplasm. It is found in the cytoskeleton. Its subcellular location is the microtubule organizing center. The protein resides in the centrosome. Its function is as follows. Component of the gamma-tubulin ring complex (gTuRC) which mediates microtubule nucleation. The gTuRC regulates the minus-end nucleation of alpha-beta tubulin heterodimers that grow into microtubule protafilaments, a critical step in centrosome duplication and spindle formation. The protein is Gamma-tubulin complex component 4 (Tubgcp4) of Mus musculus (Mouse).